The chain runs to 756 residues: ATP-dependent DNA helicase Hel308 (756 aa).

Residues Gln-29 and 47-54 (SATASGKT) each bind ATP. The 168-residue stretch at 34-201 (RAGLLNGENI…WLNAKLVKSD (168 aa)) folds into the Helicase ATP-binding domain. Residues 146–149 (DEIH) carry the DEAH box motif. A Helicase C-terminal domain is found at 233–435 (SLINLTVDTL…PTSLKFHTLS (203 aa)).

It belongs to the helicase family. Hel308 subfamily. As to quaternary structure, monomer.

It carries out the reaction Couples ATP hydrolysis with the unwinding of duplex DNA by translocating in the 3'-5' direction.. The catalysed reaction is ATP + H2O = ADP + phosphate + H(+). In terms of biological role, DNA-dependent ATPase and 3'-5' DNA helicase that may be involved in repair of stalled replication forks. The chain is ATP-dependent DNA helicase Hel308 from Caldivirga maquilingensis (strain ATCC 700844 / DSM 13496 / JCM 10307 / IC-167).